Consider the following 228-residue polypeptide: Cytidylate kinase (228 aa).

ATP is bound at residue Gly11–Ser19.

This sequence belongs to the cytidylate kinase family. Type 1 subfamily.

Its subcellular location is the cytoplasm. It carries out the reaction CMP + ATP = CDP + ADP. The enzyme catalyses dCMP + ATP = dCDP + ADP. The sequence is that of Cytidylate kinase from Mycobacterium avium (strain 104).